Reading from the N-terminus, the 553-residue chain is MSDIALTVSILALVAVVGLFIGNVKFRGIGLGIGGVLFGGIIVGHFVSQAGMTLSSDMLHVIQEFGLILFVYTIGIQVGPGFFASLRVSGLRLNLFAVLIVIIGGLVTAILHKLFDIPLPVVLGIFSGAVTNTPALGAGQQILRDLGTPMEMVDQMGMSYAMAYPFGICGILFTMWMLRVIFRVNVETEAQQHESSRTNGGALIRTINIRVENPNLHDLAIKDVPILNGDKIICSRLKREETLKVPSPDTIIQLGDLLHLVGQPADLHNAQLVIGQEVDTSLSTKGTDLRVERVVVTNENVLGKRIRDLHFKERYDVVISRLNRAGVELVASGDISLQFGDILNLVGRPSAIDAVANVLGNAQQKLQQVQMLPVFIGIGLGVLLGSIPVFVPGFPAALKLGLAGGPLIMALILGRIGSIGKLYWFMPPSANLALRELGIVLFLSVVGLKSGGDFVNTLVNGEGLSWIGYGALITAVPLITVGILARMLAKMNYLTMCGMLAGSMTDPPALAFANNLHPTSGAAALSYATVYPLVMFLRIITPQLLAVLFWSIG.

5 helical membrane passes run I4–V24, G28–S48, F65–S85, L95–F115, and M158–L178. RCK C-terminal domains are found at residues Q191 to Q276 and D279 to N361. Transmembrane regions (helical) follow at residues M371 to V391, G393 to L413, I439 to V459, L464 to L484, Y493 to A513, and L533 to G553.

The protein belongs to the AAE transporter (TC 2.A.81) family. YidE subfamily.

The protein localises to the cell membrane. The chain is Putative transport protein YidE from Escherichia coli O7:K1 (strain IAI39 / ExPEC).